The following is a 25-amino-acid chain: GFLDVVHVGKAVGKAALNAVNDLVN.

Asn25 is subject to Asparagine amide.

In terms of tissue distribution, expressed by the skin glands.

It is found in the secreted. Has antimicrobial activity. The sequence is that of Cruzioseptin-13 from Cruziohyla calcarifer (Splendid leaf frog).